A 526-amino-acid chain; its full sequence is Opine oxidase subunit A (526 aa).

[2Fe-2S] cluster-binding residues include Cys396, Cys398, Cys431, and Cys436.

The protein to T-protein and to dimethylglycine dehydrogenase. As to quaternary structure, heterodimer of a subunit A and a subunit B. [2Fe-2S] cluster serves as cofactor.

Its pathway is opine metabolism; octopine degradation. Oxidative cleavage of octopine into L-arginine and pyruvate. The sequence is that of Opine oxidase subunit A (ooxA) from Rhizobium meliloti (Ensifer meliloti).